We begin with the raw amino-acid sequence, 372 residues long: Probable G-protein coupled receptor 45 (372 aa).

Residues 1–38 (MACNSTSLEAYTYLLLNTSNASDSGSTQLPAPLRISLA) lie on the Extracellular side of the membrane. N-linked (GlcNAc...) asparagine glycosylation is found at N4, N17, and N20. The helical transmembrane segment at 39 to 59 (IVMLLMTVVGFLGNTVVCIIV) threads the bilayer. At 60–75 (YQRPAMRSAINLLLAT) the chain is on the cytoplasmic side. The chain crosses the membrane as a helical span at residues 76–96 (LAFSDIMLSLCCMPFTAVTLI). Over 97–109 (TVRWHFGDHFCRL) the chain is Extracellular. The chain crosses the membrane as a helical span at residues 110 to 130 (SATLYWFFVLEGVAILLIISV). Residues 131-149 (DRFLIIVQRQDKLNPRRAK) are Cytoplasmic-facing. A helical membrane pass occupies residues 150 to 170 (VIIAVSWVLSFCIAGPSLTGW). Over 171–198 (TLVEVPARAPQCVLGYTELPADRAYVVT) the chain is Extracellular. The chain crosses the membrane as a helical span at residues 199–219 (LVVAVFFAPFGVMLCAYMCIL). The Cytoplasmic segment spans residues 220-268 (NTVRKNAVRVHNQSDSLDLRQLTRAGLRRLQRQQQVSVDLSFKTKAFTT). A helical membrane pass occupies residues 269–289 (ILILFVGFSLCWLPHSVYSLL). The Extracellular portion of the chain corresponds to 290–305 (SVFSQRFYCGSSFYAT). A helical membrane pass occupies residues 306-326 (STCVLWLSYLKSVFNPIVYCW). Residues 327 to 372 (RIKKFREACIELLPQTFQILPKVPERIRRRIQPSTVYVCNENQSAV) are Cytoplasmic-facing.

This sequence belongs to the G-protein coupled receptor 1 family. In terms of tissue distribution, expressed in brain; detected in the basal forebrain, frontal cortex, and caudate, but not in thalamus, hippocampus, or putamen.

The protein localises to the cell membrane. Functionally, orphan receptor. May play a role in brain function. This chain is Probable G-protein coupled receptor 45 (GPR45), found in Homo sapiens (Human).